A 95-amino-acid polypeptide reads, in one-letter code: Large ribosomal subunit protein bL25 (95 aa).

The protein belongs to the bacterial ribosomal protein bL25 family. In terms of assembly, part of the 50S ribosomal subunit; part of the 5S rRNA/L5/L18/L25 subcomplex. Contacts the 5S rRNA. Binds to the 5S rRNA independently of L5 and L18.

In terms of biological role, this is one of the proteins that binds to the 5S RNA in the ribosome where it forms part of the central protuberance. In Shewanella piezotolerans (strain WP3 / JCM 13877), this protein is Large ribosomal subunit protein bL25.